The sequence spans 285 residues: Formamidopyrimidine-DNA glycosylase (285 aa).

Pro-2 functions as the Schiff-base intermediate with DNA in the catalytic mechanism. Glu-3 functions as the Proton donor in the catalytic mechanism. Lys-61 functions as the Proton donor; for beta-elimination activity in the catalytic mechanism. Residues His-102, Arg-121, and Lys-163 each contribute to the DNA site. The segment at 249–283 (NAYGQAGKPCARCGTPIARETFMNRGSHFCNRCQK) adopts an FPG-type zinc-finger fold. Arg-273 (proton donor; for delta-elimination activity) is an active-site residue.

The protein belongs to the FPG family. Monomer. It depends on Zn(2+) as a cofactor.

It carries out the reaction Hydrolysis of DNA containing ring-opened 7-methylguanine residues, releasing 2,6-diamino-4-hydroxy-5-(N-methyl)formamidopyrimidine.. The catalysed reaction is 2'-deoxyribonucleotide-(2'-deoxyribose 5'-phosphate)-2'-deoxyribonucleotide-DNA = a 3'-end 2'-deoxyribonucleotide-(2,3-dehydro-2,3-deoxyribose 5'-phosphate)-DNA + a 5'-end 5'-phospho-2'-deoxyribonucleoside-DNA + H(+). Its function is as follows. Involved in base excision repair of DNA damaged by oxidation or by mutagenic agents. Acts as a DNA glycosylase that recognizes and removes damaged bases. Has a preference for oxidized purines, such as 7,8-dihydro-8-oxoguanine (8-oxoG). Has AP (apurinic/apyrimidinic) lyase activity and introduces nicks in the DNA strand. Cleaves the DNA backbone by beta-delta elimination to generate a single-strand break at the site of the removed base with both 3'- and 5'-phosphates. The polypeptide is Formamidopyrimidine-DNA glycosylase (Corynebacterium efficiens (strain DSM 44549 / YS-314 / AJ 12310 / JCM 11189 / NBRC 100395)).